A 230-amino-acid polypeptide reads, in one-letter code: Large ribosomal subunit protein uL1 (230 aa).

The protein belongs to the universal ribosomal protein uL1 family. As to quaternary structure, part of the 50S ribosomal subunit.

Its function is as follows. Binds directly to 23S rRNA. The L1 stalk is quite mobile in the ribosome, and is involved in E site tRNA release. In terms of biological role, protein L1 is also a translational repressor protein, it controls the translation of the L11 operon by binding to its mRNA. This Lactobacillus gasseri (strain ATCC 33323 / DSM 20243 / BCRC 14619 / CIP 102991 / JCM 1131 / KCTC 3163 / NCIMB 11718 / NCTC 13722 / AM63) protein is Large ribosomal subunit protein uL1.